The sequence spans 665 residues: Transketolase 1 (665 aa).

Residue His26 coordinates substrate. Residues His66 and Gly114–Leu116 each bind thiamine diphosphate. A Mg(2+)-binding site is contributed by Asp155. Thiamine diphosphate-binding residues include Gly156 and Asn185. Asn185 and Ile187 together coordinate Mg(2+). Substrate-binding residues include His261, Arg358, and Ser385. His261 contributes to the thiamine diphosphate binding site. Catalysis depends on Glu412, which acts as the Proton donor. Position 438 (Phe438) interacts with thiamine diphosphate. His462, Asp470, and Arg521 together coordinate substrate.

The protein belongs to the transketolase family. As to quaternary structure, homodimer. It depends on Mg(2+) as a cofactor. Ca(2+) serves as cofactor. Requires Mn(2+) as cofactor. The cofactor is Co(2+). Thiamine diphosphate is required as a cofactor.

The catalysed reaction is D-sedoheptulose 7-phosphate + D-glyceraldehyde 3-phosphate = aldehydo-D-ribose 5-phosphate + D-xylulose 5-phosphate. Its function is as follows. Catalyzes the transfer of a two-carbon ketol group from a ketose donor to an aldose acceptor, via a covalent intermediate with the cofactor thiamine pyrophosphate. This Vibrio cholerae serotype O1 (strain ATCC 39315 / El Tor Inaba N16961) protein is Transketolase 1 (tkt1).